The following is a 154-amino-acid chain: Transcriptional repressor NrdR (154 aa).

A zinc finger spans residues 3–34 (CPHCHKNGSRVVDSRPSEDGSFIRRRRECIHC). Residues 49 to 139 (LLVIKKDGTR…VYRQFKDVDA (91 aa)) enclose the ATP-cone domain.

This sequence belongs to the NrdR family. The cofactor is Zn(2+).

Functionally, negatively regulates transcription of bacterial ribonucleotide reductase nrd genes and operons by binding to NrdR-boxes. This chain is Transcriptional repressor NrdR, found in Limosilactobacillus reuteri (strain DSM 20016) (Lactobacillus reuteri).